A 514-amino-acid chain; its full sequence is 1-pyrroline-5-carboxylate dehydrogenase (514 aa).

Residues E286 and C320 contribute to the active site.

Belongs to the aldehyde dehydrogenase family. RocA subfamily.

It carries out the reaction L-glutamate 5-semialdehyde + NAD(+) + H2O = L-glutamate + NADH + 2 H(+). It participates in amino-acid degradation; L-proline degradation into L-glutamate; L-glutamate from L-proline: step 2/2. In Staphylococcus haemolyticus (strain JCSC1435), this protein is 1-pyrroline-5-carboxylate dehydrogenase.